Reading from the N-terminus, the 514-residue chain is Probable endopolygalacturonase D (514 aa).

The N-terminal stretch at 1–16 (MKRCALLTPLLPLALA) is a signal peptide. Residues 134 to 166 (IKSSSPGPSSSFAAAATTEAPTSTRASPYTPYT) form a disordered region. Over residues 136-166 (SSSPGPSSSFAAAATTEAPTSTRASPYTPYT) the composition is skewed to low complexity. A disulfide bond links C173 and C188. N-linked (GlcNAc...) asparagine glycosylation occurs at N240. PbH1 repeat units follow at residues 280-302 (VYNS…DIEN), 303-341 (TESL…DIKS), 342-363 (STDL…AITS), 364-384 (GTNI…SIGS), 393-414 (VDGV…RIKT), 422-444 (VSNI…VVQQ), and 456-500 (SNGV…SITG). Positions 312–335 (TLDNSAGDEPNDSSDGDPAAHNSD) are disordered. N-linked (GlcNAc...) asparagine glycosylation is present at N322. D356 (proton donor) is an active-site residue. C358 and C374 are joined by a disulfide. N366 carries N-linked (GlcNAc...) asparagine glycosylation. The active site involves H378. N429 carries N-linked (GlcNAc...) asparagine glycosylation. The cysteines at positions 483 and 488 are disulfide-linked. A glycan (N-linked (GlcNAc...) asparagine) is linked at N490. Cysteines 506 and 513 form a disulfide.

This sequence belongs to the glycosyl hydrolase 28 family.

It localises to the secreted. It carries out the reaction (1,4-alpha-D-galacturonosyl)n+m + H2O = (1,4-alpha-D-galacturonosyl)n + (1,4-alpha-D-galacturonosyl)m.. In terms of biological role, involved in maceration and soft-rotting of plant tissue. Hydrolyzes the 1,4-alpha glycosidic bonds of de-esterified pectate in the smooth region of the plant cell wall. This chain is Probable endopolygalacturonase D (pgaD), found in Emericella nidulans (strain FGSC A4 / ATCC 38163 / CBS 112.46 / NRRL 194 / M139) (Aspergillus nidulans).